We begin with the raw amino-acid sequence, 141 residues long: Nuclear transcription factor Y subunit B-1 (141 aa).

Positions Met1–Asp23 are disordered. Ala2 carries the N-acetylalanine modification. A DNA-binding region spans residues Leu26 to Ser32. Residues Val53–Ile64 are subunit association domain (SAD). A disordered region spans residues Asp114–Trp141.

The protein belongs to the NFYB/HAP3 subunit family. As to quaternary structure, heterotrimeric transcription factor composed of three components, NF-YA, NF-YB and NF-YC. NF-YB and NF-YC must interact and dimerize for NF-YA association and DNA binding. Binds directly with DPB3-1. As to expression, ubiquitous. Predominantly expressed in leaves, flowers and siliques.

The protein localises to the nucleus. In terms of biological role, component of the NF-Y/HAP transcription factor complex. The NF-Y complex stimulates the transcription of various genes by recognizing and binding to a CCAAT motif in promoters. This is Nuclear transcription factor Y subunit B-1 from Arabidopsis thaliana (Mouse-ear cress).